Consider the following 327-residue polypeptide: GMP reductase (327 aa).

Catalysis depends on Cys175, which acts as the Thioimidate intermediate. NADP(+) is bound at residue 204 to 227 (IIADGGIRTHGDIAKSIRFGASMV).

This sequence belongs to the IMPDH/GMPR family. GuaC type 2 subfamily.

It catalyses the reaction IMP + NH4(+) + NADP(+) = GMP + NADPH + 2 H(+). Its function is as follows. Catalyzes the irreversible NADPH-dependent deamination of GMP to IMP. It functions in the conversion of nucleobase, nucleoside and nucleotide derivatives of G to A nucleotides, and in maintaining the intracellular balance of A and G nucleotides. The chain is GMP reductase from Oceanobacillus iheyensis (strain DSM 14371 / CIP 107618 / JCM 11309 / KCTC 3954 / HTE831).